The following is a 206-amino-acid chain: Translation machinery-associated protein 22 (206 aa).

The region spanning 98–169 (VVIKREARTK…EVEKYIHSLL (72 aa)) is the SUI1 domain. Positions 184-206 (SQKKKKKPTDEANSNNNNNNNNK) are disordered. Over residues 196–206 (NSNNNNNNNNK) the composition is skewed to low complexity.

Belongs to the DENR family. In terms of assembly, interacts with the 40S ribosomal subunit.

The protein resides in the cytoplasm. The chain is Translation machinery-associated protein 22 (TMA22) from Vanderwaltozyma polyspora (strain ATCC 22028 / DSM 70294 / BCRC 21397 / CBS 2163 / NBRC 10782 / NRRL Y-8283 / UCD 57-17) (Kluyveromyces polysporus).